The sequence spans 150 residues: Probable cyclase FGR4 (150 aa).

Its pathway is secondary metabolite biosynthesis. Its function is as follows. Probable cyclase; part of the gene cluster that mediates the biosynthesis of the tetraketides fugralins such as linear fugralin A and cyclic fugralin B, volatile compounds that play a role in the asexual reproductive cycle but are not involved in pathogenicity. Fugralin B is similar to fugralin A except for a cyclization between the carboxylic acid C-8 and the alcohol on C-4 resulting in a six membered lactone ring, probably catalyzed by the cyclase FGR4. One of the key features of fugralins is the presence of a double methyl group, which is only rarely encountered in fungal secondary metabolites. As the fugralins cluster does not contain an independent methyltransferase, the PKS FGR1 is probably responsible for adding two methyl groups to the same carbon atom. The exact role of the individual cluster genes remains unknown and further work is needed to unravel the biosynthetic pathway. This Gibberella zeae (strain ATCC MYA-4620 / CBS 123657 / FGSC 9075 / NRRL 31084 / PH-1) (Wheat head blight fungus) protein is Probable cyclase FGR4.